Reading from the N-terminus, the 1345-residue chain is Aldehyde oxidase 2 (1345 aa).

The 2Fe-2S ferredoxin-type domain maps to 9-96 (DELEFFVNGK…GAAVTTVEGV (88 aa)). 4 residues coordinate [2Fe-2S] cluster: C48, C53, C56, and C78. A Mo-molybdopterin-binding site is contributed by Q117. The [2Fe-2S] cluster site is built by C118, C121, C153, and C155. Residue C155 participates in Mo-molybdopterin binding. The FAD-binding PCMH-type domain maps to 238–423 (FYGERITWIA…GSVYIPHSQK (186 aa)). FAD-binding positions include 266-273 (LISGNTAL), A347, S356, H360, D369, and L413. Mo-molybdopterin-binding positions include 812 to 813 (GF), 1094 to 1097 (ASVG), Q1209, and L1274. E1276 functions as the Proton acceptor; for azaheterocycle hydroxylase activity in the catalytic mechanism.

This sequence belongs to the xanthine dehydrogenase family. Homodimer. It depends on [2Fe-2S] cluster as a cofactor. The cofactor is FAD. Mo-molybdopterin serves as cofactor.

It localises to the cytoplasm. The catalysed reaction is an aldehyde + O2 + H2O = a carboxylate + H2O2 + H(+). Functionally, oxidase with broad substrate specificity, oxidizing aromatic azaheterocycles, such as phthalazine, as well as aldehydes, such as benzaldehyde and retinal. This Rattus norvegicus (Rat) protein is Aldehyde oxidase 2 (Aox2).